Reading from the N-terminus, the 84-residue chain is CDC42 small effector protein 2-A (84 aa).

Residues Cys10 and Cys11 are each lipidated (S-palmitoyl cysteine). A CRIB domain is found at 29 to 42 (IGEPTNFVHTAHVG).

This sequence belongs to the CDC42SE/SPEC family.

The protein resides in the cytoplasm. It is found in the cytoskeleton. It localises to the cell membrane. Probably involved in the organization of the actin cytoskeleton by acting downstream of CDC42, inducing actin filament assembly. The chain is CDC42 small effector protein 2-A (cdc42se2-a) from Xenopus laevis (African clawed frog).